A 104-amino-acid polypeptide reads, in one-letter code: MAENQWVLYLLKTKSGMLYTGITTNIHRRFAQHENGKGAKSLRGKGPLQLVFSSYAGDRSNASQLEYQVKQLSKQQKERLVICQPVCIAEYLASIRNGQSVRSK.

Residues 4-79 (NQWVLYLLKT…KQLSKQQKER (76 aa)) enclose the GIY-YIG domain.

This sequence belongs to the UPF0213 family.

The sequence is that of UPF0213 protein plu4503 from Photorhabdus laumondii subsp. laumondii (strain DSM 15139 / CIP 105565 / TT01) (Photorhabdus luminescens subsp. laumondii).